The primary structure comprises 36 residues: Avenin-A (36 aa).

Belongs to the gliadin/glutenin family. Monomer.

It is found in the vacuole. Its subcellular location is the aleurone grain. Its function is as follows. Seed storage protein. Serves as a source of nitrogen, carbon, and sulfur for the young developing seedling. The sequence is that of Avenin-A from Avena sativa (Oat).